The chain runs to 169 residues: Putative phosphoesterase SE_0715 (169 aa).

Histidine 34 functions as the Proton donor in the catalytic mechanism. 2 short sequence motifs (HXTX) span residues 34–37 and 115–118; these read HITI and HFTI. The active-site Proton acceptor is histidine 115.

Belongs to the 2H phosphoesterase superfamily. YjcG family.

The polypeptide is Putative phosphoesterase SE_0715 (Staphylococcus epidermidis (strain ATCC 12228 / FDA PCI 1200)).